Here is a 62-residue protein sequence, read N- to C-terminus: Keratin-associated protein 8-1 (62 aa).

The interval 12–53 (GCYWGSYGYPLGYSVGCGYGSTYSPVGYGFGYGYNGSGAFGC) is 12 X 2 AA repeats of G-[YCGS].

It belongs to the KRTAP type 8 family. In terms of assembly, interacts with wool keratins. As to expression, wool.

In the wool cortex, wool keratin intermediate filaments are embedded in an interfilamentous matrix, consisting of hair keratin-associated proteins (KRTAP), which are essential for the formation of a rigid and resistant wool shaft through their extensive disulfide bond cross-linking with abundant cysteine residues of wool keratins. The matrix proteins include the high-sulfur and high-glycine-tyrosine keratins. In Ovis aries (Sheep), this protein is Keratin-associated protein 8-1 (KRTAP8-1).